Reading from the N-terminus, the 170-residue chain is Protein-lysine myristoyltransferase HlyC (170 aa).

Catalysis depends on residues H23 and D92. Residue H151 coordinates heme.

This sequence belongs to the RTX toxin acyltransferase family. As to quaternary structure, monomer. In terms of processing, proteolytically cleaved by the protease systems ClpAP, ClpXP and FtsH, leading to its degradation.

It is found in the cytoplasm. It catalyses the reaction tetradecanoyl-[ACP] + L-lysyl-[protein] = N(6)-tetradecanoyl-L-lysyl-[protein] + holo-[ACP] + H(+). The acyltransferase activity is inhibited by heme. Protein-lysine myristoyltransferase that catalyzes myristoylation of the protoxin (HlyA) at two internal lysine residues, thereby converting it to the active toxin. The chain is Protein-lysine myristoyltransferase HlyC from Escherichia coli.